Here is a 194-residue protein sequence, read N- to C-terminus: ATP-dependent Clp protease proteolytic subunit (194 aa).

Catalysis depends on S98, which acts as the Nucleophile. The active site involves H123.

It belongs to the peptidase S14 family. Fourteen ClpP subunits assemble into 2 heptameric rings which stack back to back to give a disk-like structure with a central cavity, resembling the structure of eukaryotic proteasomes.

It localises to the cytoplasm. It carries out the reaction Hydrolysis of proteins to small peptides in the presence of ATP and magnesium. alpha-casein is the usual test substrate. In the absence of ATP, only oligopeptides shorter than five residues are hydrolyzed (such as succinyl-Leu-Tyr-|-NHMec, and Leu-Tyr-Leu-|-Tyr-Trp, in which cleavage of the -Tyr-|-Leu- and -Tyr-|-Trp bonds also occurs).. Cleaves peptides in various proteins in a process that requires ATP hydrolysis. Has a chymotrypsin-like activity. Plays a major role in the degradation of misfolded proteins. The polypeptide is ATP-dependent Clp protease proteolytic subunit (Acetivibrio thermocellus (strain ATCC 27405 / DSM 1237 / JCM 9322 / NBRC 103400 / NCIMB 10682 / NRRL B-4536 / VPI 7372) (Clostridium thermocellum)).